Here is a 921-residue protein sequence, read N- to C-terminus: Isoleucine--tRNA ligase (921 aa).

The short motif at 57 to 67 is the 'HIGH' region element; sequence PYANGDIHMGH. Residue E552 coordinates L-isoleucyl-5'-AMP. The short motif at 593–597 is the 'KMSKS' region element; the sequence is KMSKS. Residue K596 coordinates ATP. Residues C888, C891, C908, and C911 each coordinate Zn(2+).

The protein belongs to the class-I aminoacyl-tRNA synthetase family. IleS type 1 subfamily. Monomer. Requires Zn(2+) as cofactor.

The protein localises to the cytoplasm. The catalysed reaction is tRNA(Ile) + L-isoleucine + ATP = L-isoleucyl-tRNA(Ile) + AMP + diphosphate. Catalyzes the attachment of isoleucine to tRNA(Ile). As IleRS can inadvertently accommodate and process structurally similar amino acids such as valine, to avoid such errors it has two additional distinct tRNA(Ile)-dependent editing activities. One activity is designated as 'pretransfer' editing and involves the hydrolysis of activated Val-AMP. The other activity is designated 'posttransfer' editing and involves deacylation of mischarged Val-tRNA(Ile). The chain is Isoleucine--tRNA ligase from Bacillus mycoides (strain KBAB4) (Bacillus weihenstephanensis).